An 805-amino-acid polypeptide reads, in one-letter code: Arginine/serine-rich protein PNISR (805 aa).

Polar residues predominate over residues 74-88 (PNNHGNFQGDSNFNR). Disordered stretches follow at residues 74–331 (PNNH…EEKE) and 382–805 (LTGL…SRSR). 2 stretches are compositionally biased toward pro residues: residues 100-115 (PPHP…PTPG) and 183-195 (YWQP…PAPP). The segment covering 197–210 (NRRERPSSFRDRQR) has biased composition (basic and acidic residues). Ser204 and Ser211 each carry phosphoserine. Lys218 participates in a covalent cross-link: Glycyl lysine isopeptide (Lys-Gly) (interchain with G-Cter in SUMO2). Residues 237-276 (REGLEKMEREKQKKLEKERMEQQRSQLSKKEKKATEDAEG) are a coiled coil. Basic and acidic residues predominate over residues 238 to 258 (EGLEKMEREKQKKLEKERMEQ). Phosphoserine is present on residues Ser290, Ser304, Ser313, and Ser321. Acidic residues predominate over residues 290 to 299 (SDEEEEDTEN). The span at 384–393 (GLGGLGGYGS) shows a compositional bias: gly residues. Residues 421–463 (QKQEAFWRKEKEQQLLHDKQMEEEKQQTERVTKEMNEFIHKEQ) are compositionally biased toward basic and acidic residues. Residues 429-461 (KEKEQQLLHDKQMEEEKQQTERVTKEMNEFIHK) are a coiled coil. A phosphoserine mark is found at Ser465 and Ser467. Composition is skewed to basic and acidic residues over residues 470 to 486 (EARE…KRTP) and 494 to 506 (EPKK…EKQG). Phosphothreonine is present on Thr485. Lys496 is covalently cross-linked (Glycyl lysine isopeptide (Lys-Gly) (interchain with G-Cter in SUMO2)). Residues 508–550 (SRSGSSSSGSSSSNSRTSSTSSTVSSSSYSSSSGSSRTSSRSS) show a composition bias toward low complexity. Basic residues-rich tracts occupy residues 551–579 (SPKR…YSRR), 587–598 (ARVKIRDRRRSN), and 607–639 (RRNR…SRDR). Over residues 659-721 (EAKEQERKKE…KRKRESERTF (63 aa)) the composition is skewed to basic and acidic residues. Residues 673-703 (IDKDRKKKDKEREREQDKRKEKQKREEKDFK) are a coiled coil. Lys703 participates in a covalent cross-link: Glycyl lysine isopeptide (Lys-Gly) (interchain with G-Cter in SUMO2). Ser726 is modified (phosphoserine). Over residues 732 to 753 (IRHDSRQDSKKSTTKDSKKHSG) the composition is skewed to basic and acidic residues. Residues 754-767 (SDSSGRSSSESPGS) show a composition bias toward low complexity. Composition is skewed to basic residues over residues 771-781 (KKAKKPKHSRS) and 789-805 (RSGK…SRSR).

This sequence belongs to the splicing factor SR family. Interacts with PNN. Expressed in heart, skeletal muscle, thymus, spleen, kidney, liver, placenta and leukocytes.

The protein resides in the nucleus speckle. This is Arginine/serine-rich protein PNISR (PNISR) from Homo sapiens (Human).